We begin with the raw amino-acid sequence, 154 residues long: DNA gyrase inhibitor (154 aa).

The protein belongs to the DNA gyrase inhibitor family. Interacts with DNA gyrase.

It localises to the cytoplasm. Inhibits the supercoiling activity of DNA gyrase. Acts by inhibiting DNA gyrase at an early step, prior to (or at the step of) binding of DNA by the gyrase. It protects cells against toxins that target DNA gyrase, by inhibiting activity of these toxins and reducing the formation of lethal double-strand breaks in the cell. The polypeptide is DNA gyrase inhibitor (Pectobacterium carotovorum subsp. carotovorum (strain PC1)).